The following is a 355-amino-acid chain: Peptide chain release factor 1 (355 aa).

Q233 carries the N5-methylglutamine modification. Residues 280-293 are compositionally biased toward basic and acidic residues; sequence KRRQKEQERSDSRR. The segment at 280 to 310 is disordered; sequence KRRQKEQERSDSRRGQVGSGDRSERIRTYNF.

The protein belongs to the prokaryotic/mitochondrial release factor family. Methylated by PrmC. Methylation increases the termination efficiency of RF1.

It is found in the cytoplasm. Its function is as follows. Peptide chain release factor 1 directs the termination of translation in response to the peptide chain termination codons UAG and UAA. The polypeptide is Peptide chain release factor 1 (prfA) (Rickettsia prowazekii (strain Madrid E)).